We begin with the raw amino-acid sequence, 134 residues long: L-ectoine synthase (134 aa).

This sequence belongs to the ectoine synthase family.

The catalysed reaction is (2S)-4-acetamido-2-aminobutanoate = L-ectoine + H2O. It participates in amine and polyamine biosynthesis; ectoine biosynthesis; L-ectoine from L-aspartate 4-semialdehyde: step 3/3. Its function is as follows. Catalyzes the circularization of gamma-N-acetyl-alpha,gamma-diaminobutyric acid (ADABA) to ectoine (1,4,5,6-tetrahydro-2-methyl-4-pyrimidine carboxylic acid), which is an excellent osmoprotectant. This is L-ectoine synthase from Shouchella clausii (strain KSM-K16) (Alkalihalobacillus clausii).